Reading from the N-terminus, the 746-residue chain is Root phototropism protein 3 (746 aa).

The tract at residues 1 to 24 (MMWESESDGGVGVGGGGGREYGDG) is disordered. Gly residues predominate over residues 9 to 19 (GGVGVGGGGGR). The 69-residue stretch at 54–122 (SDLLVKIGDM…CYGVPVDLTA (69 aa)) folds into the BTB domain. The region spanning 250-605 (DWWFEDVSIL…VQVLFSEQVK (356 aa)) is the NPH3 domain. A disordered region spans residues 461–500 (EQTEGSSPSRMSPSPSQSMYADIPRGNNNNGGGGGGNNQN). Residues 466 to 478 (SSPSRMSPSPSQS) show a composition bias toward low complexity. Tyr546 is subject to Phosphotyrosine. A disordered region spans residues 708–746 (SKLTKMSGQESHDISSGGEQAGVDHPPPRKPRRWRNSIS). Positions 735–746 (PRKPRRWRNSIS) are enriched in basic residues.

Belongs to the NPH3 family. Interacts with PKS1, PKS2, RPT2, PHOT1 and PHOT2. Subunit of a complex made of CAR6, PHOT1 and RPT3/NPH3. In terms of processing, phosphorylated in the dark. As to expression, expressed in hypocotyls, guard cells and mesophyll cells.

The protein localises to the cell membrane. It functions in the pathway protein modification; protein ubiquitination. In terms of biological role, may act as a substrate-specific adapter of an E3 ubiquitin-protein ligase complex (CUL3-RBX1-BTB) which mediates the ubiquitination and subsequent proteasomal degradation of target proteins. Signal transducer of the phototropic response and photo-induced movements. Involved in the phot1 pathway under low blue light (LBL) fluence rate and in the phot2 pathway under higher fluence rate of blue light (HBL). Necessary for root and hypocotyl phototropisms, but not for the regulation of stomata opening. Not involved in chloroplast accumulation and translocation. This Arabidopsis thaliana (Mouse-ear cress) protein is Root phototropism protein 3 (RPT3).